The primary structure comprises 224 residues: Response regulator protein GraR (224 aa).

In terms of domain architecture, Response regulatory spans 2–115 (QILLVEDDNT…VLIAKLQAIY (114 aa)). A 4-aspartylphosphate modification is found at aspartate 51. A DNA-binding region (ompR/PhoB-type) is located at residues 126 to 224 (KRTLTWQDAV…KVGKGYMAHE (99 aa)). Threonine 128, threonine 130, and threonine 149 each carry phosphothreonine.

As to quaternary structure, interacts with GraX. Phosphorylated by GraS. Phosphorylated by Stk1; phosphorylation increases the DNA-binding activity of GraR.

The protein localises to the cytoplasm. Functionally, member of the two-component regulatory system GraR/GraS involved in resistance against cationic antimicrobial peptides (CAMPs). Upon phosphorylation by GraS, functions as a transcription regulator by direct binding to promoter regions of target genes such as adhesins, exoproteins, transporters, toxins, and proteins involved in cell wall synthesis. Down-regulates the expression of many genes involved in RNA and amino acid synthesis or glycolysis. The protein is Response regulator protein GraR (graR) of Staphylococcus aureus (strain USA300).